A 63-amino-acid polypeptide reads, in one-letter code: Large ribosomal subunit protein bL28 (63 aa).

The tract at residues 1–20 is disordered; sequence MSRRCAITGKGPMVGNNVSH.

This sequence belongs to the bacterial ribosomal protein bL28 family.

The sequence is that of Large ribosomal subunit protein bL28 from Campylobacter curvus (strain 525.92).